The sequence spans 369 residues: Immunoglobulin superfamily member 5 (369 aa).

An N-terminal signal peptide occupies residues 1–24 (MEGSWRDVLAVLVILAQLTVSGSS). 2 consecutive Ig-like V-type domains span residues 25 to 125 (YQII…LSVQ) and 128 to 217 (GTLN…LTVN). Over 25–239 (YQIIEGPRNV…GEGQALPTWA (215 aa)) the chain is Extracellular. N-linked (GlcNAc...) asparagine glycosylation is found at Asn33 and Asn45. A disulfide bridge connects residues Cys46 and Cys109. N-linked (GlcNAc...) asparagine glycosylation is found at Asn146, Asn196, and Asn217. The cysteines at positions 149 and 201 are disulfide-linked. The chain crosses the membrane as a helical span at residues 240 to 260 (IILLAVAFSLLLILIIALIII). At 261–369 (FCCCCVSRRE…PQKIRNVTIV (109 aa)) the chain is on the cytoplasmic side. Residues 321-354 (PKSGEVSLPEQRSSLPQQELDKHRPSPVTHPRVS) are disordered.

The protein belongs to the immunoglobulin superfamily. As to quaternary structure, interacts with MAGI1 at tight junctions, forms a tripartite complex with NPHS1. Interacts with LNX1 isoform 2 via its PDZ 2 domain, it may also interact with other isoforms containing this domain. As to expression, in kidney, it is found in glomeruli and in the proximal tubules (at protein level).

Its subcellular location is the apical cell membrane. It localises to the cell junction. The protein resides in the tight junction. Provides, together with MAGI1, an adhesion machinery at tight junctions, which may regulate the permeability of kidney glomerulus and small intestinal epithelial cells. Mediates calcium-independent homophilic cell adhesion. In testis, it may function as a cell adhesion molecule rather than a tight-junction protein. It may participate in the adhesion between spermatogonia-spermatogonia, spermatogonia-Sertoli cells, and Sertoli cells-Sertoli cells. This Rattus norvegicus (Rat) protein is Immunoglobulin superfamily member 5 (Igsf5).